A 338-amino-acid chain; its full sequence is MTRISLTRYLVEEQRKHNTIEPELRLLIEVVARACKAISNAVSKGALAGVLGSAGTGNVQGETQQKLDVIANEVLLDANEWGGHLAAMASEEMDSFYEIPNRYPKGEYLLLFDPLDGSSNIDVNVSIGTIFSVLHMHKPGQTVTEHDFMQPGTQQVAAGYAVYGPQTTLVLTVGNGVHMFTLDREAGSFVLTQSDVMIPEDTKEFAINMSNMRHWAPPVRRYIDECLAGDEGPRGKNFNMRWIASMVADVHRILTRGGVFMYPWDKREPEKPGKLRLMYEANPMAFLVEQAGGAATNGQQRILDVEPTKLHQRVSVILGSKNEVERVTRYHQEDAAKA.

Glu-91, Asp-113, Leu-115, and Asp-116 together coordinate Mg(2+). Residues 116-119 (DGSS), Asn-208, and Lys-274 contribute to the substrate site. Glu-280 is a binding site for Mg(2+).

This sequence belongs to the FBPase class 1 family. As to quaternary structure, homotetramer. Requires Mg(2+) as cofactor.

The protein resides in the cytoplasm. The catalysed reaction is beta-D-fructose 1,6-bisphosphate + H2O = beta-D-fructose 6-phosphate + phosphate. The protein operates within carbohydrate biosynthesis; gluconeogenesis. In Cupriavidus metallidurans (strain ATCC 43123 / DSM 2839 / NBRC 102507 / CH34) (Ralstonia metallidurans), this protein is Fructose-1,6-bisphosphatase class 1 1.